Consider the following 293-residue polypeptide: Protein Pat (293 aa).

The BEN domain maps to 187 to 287 (LPDIILNPLD…LLLRTRQDRA (101 aa)).

In terms of assembly, interacts with poc1b. As to expression, an mRNA and protein component of germ plasm and primordial germ cells (PGCs) throughout oogenesis and early development, being first localized to the granulo-fibrillar material (GFM) of the mitochondrial cloud in stage I and II oocytes and to the periphery of mature germinal granules both in oocytes and in embryos. Shows some somatic expression including the ectodermal cells of tailbud embryos. In adults, only expressed in ovaries.

It localises to the cytoplasm. The protein localises to the nucleus. In terms of biological role, probably plays a role in germ plasm formation, positioning and maintenance. The protein is Protein Pat of Xenopus laevis (African clawed frog).